The primary structure comprises 240 residues: Ribosomal RNA small subunit methyltransferase G (240 aa).

S-adenosyl-L-methionine is bound by residues Gly-77, Phe-82, 128–129 (AE), and Arg-148. Residues 217–240 (EKRSKTPKKYPRKAGTPNKSPLLK) are disordered.

The protein belongs to the methyltransferase superfamily. RNA methyltransferase RsmG family.

It localises to the cytoplasm. Specifically methylates the N7 position of guanine in position 535 of 16S rRNA. This Staphylococcus carnosus (strain TM300) protein is Ribosomal RNA small subunit methyltransferase G.